The sequence spans 104 residues: Large ribosomal subunit protein uL24 (104 aa).

This sequence belongs to the universal ribosomal protein uL24 family. In terms of assembly, part of the 50S ribosomal subunit.

In terms of biological role, one of two assembly initiator proteins, it binds directly to the 5'-end of the 23S rRNA, where it nucleates assembly of the 50S subunit. Its function is as follows. One of the proteins that surrounds the polypeptide exit tunnel on the outside of the subunit. This Yersinia pseudotuberculosis serotype O:1b (strain IP 31758) protein is Large ribosomal subunit protein uL24.